An 86-amino-acid polypeptide reads, in one-letter code: Large ribosomal subunit protein bL31B (86 aa).

This sequence belongs to the bacterial ribosomal protein bL31 family. Type B subfamily. As to quaternary structure, part of the 50S ribosomal subunit.

The sequence is that of Large ribosomal subunit protein bL31B from Streptococcus equi subsp. zooepidemicus (strain H70).